The chain runs to 207 residues: Small ribosomal subunit protein uS4 (207 aa).

Positions 29–38 (QDKAKFDSKP) are enriched in basic and acidic residues. Positions 29–54 (QDKAKFDSKPGQHGRTSGQRTSDYGL) are disordered. Polar residues predominate over residues 42–52 (GRTSGQRTSDY). Residues 97-160 (SRLDNVVYRM…KKQTRIAEAL (64 aa)) enclose the S4 RNA-binding domain.

It belongs to the universal ribosomal protein uS4 family. As to quaternary structure, part of the 30S ribosomal subunit. Contacts protein S5. The interaction surface between S4 and S5 is involved in control of translational fidelity.

Functionally, one of the primary rRNA binding proteins, it binds directly to 16S rRNA where it nucleates assembly of the body of the 30S subunit. Its function is as follows. With S5 and S12 plays an important role in translational accuracy. The sequence is that of Small ribosomal subunit protein uS4 from Variovorax paradoxus (strain S110).